A 156-amino-acid chain; its full sequence is Small ribosomal subunit protein uS7 (156 aa).

It belongs to the universal ribosomal protein uS7 family. In terms of assembly, part of the 30S ribosomal subunit. Contacts proteins S9 and S11.

Functionally, one of the primary rRNA binding proteins, it binds directly to 16S rRNA where it nucleates assembly of the head domain of the 30S subunit. Is located at the subunit interface close to the decoding center, probably blocks exit of the E-site tRNA. This Chromobacterium violaceum (strain ATCC 12472 / DSM 30191 / JCM 1249 / CCUG 213 / NBRC 12614 / NCIMB 9131 / NCTC 9757 / MK) protein is Small ribosomal subunit protein uS7.